Reading from the N-terminus, the 202-residue chain is Protein FAR-RED ELONGATED HYPOCOTYL 1 (202 aa).

Ser-39 carries the post-translational modification Phosphoserine. Residues 40 to 43 carry the Nuclear localization sequence (NLS) motif; that stretch reads KKRK. A Nuclear export sequence (NES) motif is present at residues 54–57; it reads LLPL. Position 61 is a phosphothreonine (Thr-61).

Belongs to the FHY1 protein family. In terms of assembly, homodimer and heterodimer with FHL. Interacts with underphosphorylated PHYA, especially upon far-red (FR) light illumination. Binds to LAF1 and HFR1. Forms PHYA/FHY1/HFR1 complex in darkness but dissociates from PHYA and HFR1 in response to continuous FR light (FRc). Post-translationally, inactivated by rapid reversible PHYA-mediated phosphorylation at Ser-39 and Thr-61 in red light (R), thus inhibiting PHYA signaling in a negative feedback loop; this ensures the seedling deetiolation process in response to a R-enriched light condition. Subsequent exposure to far-red light (FR) after the R conditions leads to dephosphorylation. The phosphorylated form is cytoplasmic only and unable to bind to chromatin at direct target genes whereas the unphosphorylated form can shuttle from cytoplasm to nucleus. In terms of tissue distribution, expressed in hypocotyl cells of etiolated plants.

It is found in the nucleus. The protein localises to the cytoplasm. Its function is as follows. Key regulator of far red / red (FR/R) spectrum-specific responses essential for the adaption to changing light conditions (e.g. de-etiolation), essentially by regulating PHYA shuttling from the cytoplasm to the nucleus and by directly regulating the expression of some target genes, depending on light conditions and phosphorylation status. Binds chromatin at target genes promoters, especially in FR light conditions. Can activate transcription of different genes, some being in a phytochrome A (PHYA)-dependent and other in a PHYA-independent manners. Controls specific aspects of plant development, such as the inhibition of seed germination under FR during salt stress. Essential for light-regulated PHYA nuclear accumulation and subsequent PHYA phototropic signaling processes involved in photomorphogenesis. Mediates the association of PHYA with HFR1 and LAF1 in the nucleus in response to FR conditions. PHYA-specific signal transducer in response to continuous FR lights. Contributes to inhibition of hypocotyl elongation in continuous blue light (B). This Arabidopsis thaliana (Mouse-ear cress) protein is Protein FAR-RED ELONGATED HYPOCOTYL 1.